Consider the following 267-residue polypeptide: Tryptophan synthase alpha chain (267 aa).

Catalysis depends on proton acceptor residues glutamate 49 and aspartate 60.

This sequence belongs to the TrpA family. In terms of assembly, tetramer of two alpha and two beta chains.

It carries out the reaction (1S,2R)-1-C-(indol-3-yl)glycerol 3-phosphate + L-serine = D-glyceraldehyde 3-phosphate + L-tryptophan + H2O. It participates in amino-acid biosynthesis; L-tryptophan biosynthesis; L-tryptophan from chorismate: step 5/5. The alpha subunit is responsible for the aldol cleavage of indoleglycerol phosphate to indole and glyceraldehyde 3-phosphate. The protein is Tryptophan synthase alpha chain of Salinispora tropica (strain ATCC BAA-916 / DSM 44818 / JCM 13857 / NBRC 105044 / CNB-440).